Consider the following 88-residue polypeptide: Cytochrome c oxidase subunit 6B2 (88 aa).

Positions 1-22 are disordered; that stretch reads MLDVEAQEPPKGKWSTPPFDPR. The CHCH domain occupies 29-75; that stretch reads IRNCYQNFLDYHRCLKTRTRRGKSTQPCEYYFRVYHSLCPISWVESW. The Cx9C motif signature appears at 32–42; that stretch reads CYQNFLDYHRC. Cystine bridges form between Cys32–Cys67 and Cys42–Cys56. The short motif at 56–67 is the Cx10C motif element; it reads CEYYFRVYHSLC.

Belongs to the cytochrome c oxidase subunit 6B family. In terms of assembly, component of the cytochrome c oxidase (complex IV, CIV), a multisubunit enzyme composed of 14 subunits. The complex is composed of a catalytic core of 3 subunits MT-CO1, MT-CO2 and MT-CO3, encoded in the mitochondrial DNA, and 11 supernumerary subunits COX4I1 (or COX4I2), COX5A, COX5B, COX6A1 (or COX6A2), COX6B1 (or COX6B2), COX6C, COX7A2 (or COX7A1), COX7B, COX7C, COX8A and NDUFA4, which are encoded in the nuclear genome. The complex exists as a monomer or a dimer and forms supercomplexes (SCs) in the inner mitochondrial membrane with NADH-ubiquinone oxidoreductase (complex I, CI) and ubiquinol-cytochrome c oxidoreductase (cytochrome b-c1 complex, complex III, CIII), resulting in different assemblies (supercomplex SCI(1)III(2)IV(1) and megacomplex MCI(2)III(2)IV(2)). Testis specific. Weak expression in thymus and heart. Expressed in cancer cell lines.

The protein localises to the mitochondrion inner membrane. It participates in energy metabolism; oxidative phosphorylation. Component of the cytochrome c oxidase, the last enzyme in the mitochondrial electron transport chain which drives oxidative phosphorylation. The respiratory chain contains 3 multisubunit complexes succinate dehydrogenase (complex II, CII), ubiquinol-cytochrome c oxidoreductase (cytochrome b-c1 complex, complex III, CIII) and cytochrome c oxidase (complex IV, CIV), that cooperate to transfer electrons derived from NADH and succinate to molecular oxygen, creating an electrochemical gradient over the inner membrane that drives transmembrane transport and the ATP synthase. Cytochrome c oxidase is the component of the respiratory chain that catalyzes the reduction of oxygen to water. Electrons originating from reduced cytochrome c in the intermembrane space (IMS) are transferred via the dinuclear copper A center (CU(A)) of subunit 2 and heme A of subunit 1 to the active site in subunit 1, a binuclear center (BNC) formed by heme A3 and copper B (CU(B)). The BNC reduces molecular oxygen to 2 water molecules using 4 electrons from cytochrome c in the IMS and 4 protons from the mitochondrial matrix. The sequence is that of Cytochrome c oxidase subunit 6B2 (COX6B2) from Homo sapiens (Human).